The following is a 518-amino-acid chain: 3-phosphoshikimate 1-carboxyvinyltransferase 1, chloroplastic (518 aa).

Residues 1-74 (MAQISSMGQG…RISASVVTAQ (74 aa)) constitute a chloroplast transit peptide. 3-phosphoshikimate contacts are provided by Lys-97, Ser-98, and Arg-102. Lys-97 contributes to the phosphoenolpyruvate binding site. Phosphoenolpyruvate is bound by residues Gly-175 and Arg-205. 3-phosphoshikimate is bound by residues Ser-252, Ser-253, Gln-254, Ser-280, Asp-405, and Lys-432. Gln-254 is a binding site for phosphoenolpyruvate. Asp-405 serves as the catalytic Proton acceptor. Phosphoenolpyruvate is bound by residues Arg-436, Arg-478, and Lys-503.

This sequence belongs to the EPSP synthase family.

Its subcellular location is the plastid. It localises to the chloroplast. The catalysed reaction is 3-phosphoshikimate + phosphoenolpyruvate = 5-O-(1-carboxyvinyl)-3-phosphoshikimate + phosphate. Its pathway is metabolic intermediate biosynthesis; chorismate biosynthesis; chorismate from D-erythrose 4-phosphate and phosphoenolpyruvate: step 6/7. Its function is as follows. Catalyzes the transfer of the enolpyruvyl moiety of phosphoenolpyruvate (PEP) to the 5-hydroxyl of shikimate-3-phosphate (S3P) to produce enolpyruvyl shikimate-3-phosphate and inorganic phosphate. The sequence is that of 3-phosphoshikimate 1-carboxyvinyltransferase 1, chloroplastic (EPSPS-1) from Nicotiana tabacum (Common tobacco).